A 137-amino-acid chain; its full sequence is Ribosome-binding factor A (137 aa).

Positions 114–137 are disordered; that stretch reads QLIDEARAEDRELRPEDDETGNNE. Residues 117-127 show a composition bias toward basic and acidic residues; the sequence is DEARAEDRELR. Residues 128-137 are compositionally biased toward acidic residues; that stretch reads PEDDETGNNE.

It belongs to the RbfA family. Monomer. Binds 30S ribosomal subunits, but not 50S ribosomal subunits or 70S ribosomes.

It is found in the cytoplasm. Its function is as follows. One of several proteins that assist in the late maturation steps of the functional core of the 30S ribosomal subunit. Associates with free 30S ribosomal subunits (but not with 30S subunits that are part of 70S ribosomes or polysomes). Required for efficient processing of 16S rRNA. May interact with the 5'-terminal helix region of 16S rRNA. This chain is Ribosome-binding factor A, found in Alcanivorax borkumensis (strain ATCC 700651 / DSM 11573 / NCIMB 13689 / SK2).